Reading from the N-terminus, the 150-residue chain is Protein Turandot X (150 aa).

The signal sequence occupies residues 1-22 (MGLHIGSLLICVFLGILPFATA). Residues 127-150 (REEGQSNHANSPTTLPSRIQKMTK) form a disordered region. Residues 132–150 (SNHANSPTTLPSRIQKMTK) are compositionally biased toward polar residues.

This sequence belongs to the Turandot family.

It is found in the secreted. In terms of biological role, a humoral factor that may play a role in stress tolerance. The sequence is that of Protein Turandot X from Drosophila simulans (Fruit fly).